The chain runs to 326 residues: Transposase InsH for insertion sequence element IS5Y (326 aa).

It belongs to the transposase 11 family.

Involved in the transposition of the insertion sequence IS5. The protein is Transposase InsH for insertion sequence element IS5Y (insH5) of Escherichia coli (strain K12).